The chain runs to 60 residues: Small, acid-soluble spore protein H 1 (60 aa).

Residues 39–60 (IHPLDNPNQKQSVPVASLEEHS) form a disordered region.

Belongs to the SspH family.

It is found in the spore core. This is Small, acid-soluble spore protein H 1 from Geobacillus kaustophilus (strain HTA426).